The sequence spans 454 residues: tRNA modification GTPase MnmE (454 aa).

(6S)-5-formyl-5,6,7,8-tetrahydrofolate-binding residues include Arg-23, Glu-80, and Lys-120. One can recognise a TrmE-type G domain in the interval 216-377; sequence GMKVVIAGRP…LRDHLKQSMG (162 aa). Residue Asn-226 participates in K(+) binding. GTP contacts are provided by residues 226–231, 245–251, 270–273, 335–338, and 358–360; these read NAGKSS, TDIAGTT, DTAG, NKAD, and SAR. A Mg(2+)-binding site is contributed by Ser-230. K(+) contacts are provided by Thr-245, Ile-247, and Thr-250. Thr-251 lines the Mg(2+) pocket. Lys-454 contacts (6S)-5-formyl-5,6,7,8-tetrahydrofolate.

Belongs to the TRAFAC class TrmE-Era-EngA-EngB-Septin-like GTPase superfamily. TrmE GTPase family. Homodimer. Heterotetramer of two MnmE and two MnmG subunits. The cofactor is K(+).

Its subcellular location is the cytoplasm. Exhibits a very high intrinsic GTPase hydrolysis rate. Involved in the addition of a carboxymethylaminomethyl (cmnm) group at the wobble position (U34) of certain tRNAs, forming tRNA-cmnm(5)s(2)U34. The chain is tRNA modification GTPase MnmE from Yersinia pseudotuberculosis serotype O:3 (strain YPIII).